Reading from the N-terminus, the 550-residue chain is MAGPPALPPPETAAAATTAAAAASSSAASPHYQEWILDTIDSLRSRKARPDLERICRMVRRRHGPEPERTRAELEKLIQQRAVLRVSYKGSISYRNAARVQPPRRGATPPAPPRAPRGGPAAAAAPPPTPAPPPPPAPVAAAAAPARAPRAAAAAAAATAPPSPGPAQPGPRAQRAAPLAAPPPAPAAPPAAAPPAGPRRAPPPAAAVAARESPLPPPPQPPAPPQQQQQPPPPPPPQQPQPPPEGGAARAGGPARPVSLREVVRYLGGSSGAGGRLTRGRVQGLLEEEAAARGRLERTRLGALALPRGDRPGRAPPAASARAARNKRAGEERVLEKEEEEEEEEDDEDDDDDVVSEGSEVPESDRPAGAQHHQLNGGERGPQTAKERAKEWSLCGPHPGQEEGRGPAAGSGTRQVFSMAALSKEGGSASSTTGPDSPSPVPLPPGKPALPGADGTPFGCPAGRKEKPADPVEWTVMDVVEYFTEAGFPEQATAFQEQEIDGKSLLLMQRTDVLTGLSIRLGPALKIYEHHIKVLQQGHFEDDDPEGFLG.

A compositionally biased stretch (pro residues) spans 1 to 11 (MAGPPALPPPE). Disordered stretches follow at residues 1 to 32 (MAGP…SPHY) and 93 to 468 (SYRN…KEKP). The segment covering 12 to 30 (TAAAATTAAAAASSSAASP) has biased composition (low complexity). The SAMD1-like winged helix (WH) domain maps to 24-100 (SSSAASPHYQ…SISYRNAARV (77 aa)). Thr108 bears the Phosphothreonine mark. Pro residues predominate over residues 125–138 (APPPTPAPPPPPAP). A compositionally biased stretch (low complexity) spans 139 to 160 (VAAAAAPARAPRAAAAAAAATA). Ser163 carries the post-translational modification Phosphoserine. Low complexity predominate over residues 170-179 (GPRAQRAAPL). Composition is skewed to pro residues over residues 180-205 (AAPP…PPPA) and 214-245 (PLPP…PPPE). The segment covering 246-257 (GGAARAGGPARP) has biased composition (low complexity). Ser270 is subject to Phosphoserine. The segment covering 290–300 (AAARGRLERTR) has biased composition (basic and acidic residues). Residues 337–355 (KEEEEEEEEDDEDDDDDVV) are compositionally biased toward acidic residues. Positions 437-448 (SPSPVPLPPGKP) are enriched in pro residues. Residues 474–542 (WTVMDVVEYF…KVLQQGHFED (69 aa)) form the SAM domain.

Homopolymerize into a closed pentameric ring. Interacts (via SAM domain) with L3MBTL3 (via SAM domain); the interaction mediates L3MBTL3 binding to chromatin. Interacts (via WH domain) with KDM1A; the interaction modulates KDM1A function.

Its subcellular location is the nucleus. The protein resides in the chromosome. The protein localises to the secreted. In terms of biological role, unmethylated CpG islands (CGIs)-binding protein which localizes to H3K4me3-decorated CGIs, where it acts as a transcriptional repressor. Tethers L3MBTL3 to chromatin and interacts with the KDM1A histone demethylase complex to modulate H3K4me2 and H3K4me3 levels at CGIs. Plays a role in atherogenesis by binding with LDL on cell surface and promoting LDL oxidation which leads to the formation of foam cell. The polypeptide is Atherin (SAMD1) (Oryctolagus cuniculus (Rabbit)).